The following is a 578-amino-acid chain: Matrix metalloproteinase-17 (578 aa).

Disordered stretches follow at residues 1-22 (MGRRPRGPGSPRGPGPPRPGPG) and 107-133 (PRCSLPDLPPGAQSRRKRQTPPPTKWS). An N-terminal signal peptide occupies residues 1 to 39 (MGRRPRGPGSPRGPGPPRPGPGLPPLLLVLALAAHGGCA). Over residues 11-22 (PRGPGPPRPGPG) the composition is skewed to pro residues. A propeptide spanning residues 40-124 (APAPRAEDLS…PPGAQSRRKR (85 aa)) is cleaved from the precursor. Positions 107–114 (PRCSLPDL) match the Cysteine switch motif. Position 109 (Cys109) interacts with Zn(2+). Residue Asn136 is glycosylated (N-linked (GlcNAc...) asparagine). Residue His247 coordinates Zn(2+). Glu248 is a catalytic residue. Zn(2+) contacts are provided by His251 and His257. Residues 301–334 (PTAQLDTPEPEEPPLLPEPPNNRSSTPPQKDVPH) form a disordered region. An N-linked (GlcNAc...) asparagine glycan is attached at Asn322. Hemopexin repeat units lie at residues 333 to 382 (PHRC…WRGL), 386 to 432 (LDSV…SLPP), 436 to 479 (DAVF…WRGV), and 480 to 527 (PSML…WLVC). Cys336 and Cys527 are joined by a disulfide. Residue Ser558 is the site of GPI-anchor amidated serine attachment. The propeptide at 559–578 (DAHRLALPSLLLLTPLLWGL) is removed in mature form.

Belongs to the peptidase M10A family. Zn(2+) serves as cofactor. It depends on Ca(2+) as a cofactor. Post-translationally, the precursor is cleaved by a furin endopeptidase. As to expression, expressed by monocytes and macrophages.

The protein resides in the cell membrane. The protein localises to the secreted. It localises to the extracellular space. Its subcellular location is the extracellular matrix. Endopeptidase that degrades various components of the extracellular matrix, such as fibrin. May be involved in the activation of membrane-bound precursors of growth factors or inflammatory mediators, such as tumor necrosis factor-alpha. May also be involved in tumoral process. Not obvious if able to proteolytically activate progelatinase A. Does not hydrolyze collagen types I, II, III, IV and V, gelatin, fibronectin, laminin, decorin nor alpha1-antitrypsin. The chain is Matrix metalloproteinase-17 (Mmp17) from Mus musculus (Mouse).